Consider the following 478-residue polypeptide: Argininosuccinate lyase (478 aa).

The protein belongs to the lyase 1 family. Argininosuccinate lyase subfamily.

The protein resides in the cytoplasm. It catalyses the reaction 2-(N(omega)-L-arginino)succinate = fumarate + L-arginine. Its pathway is amino-acid biosynthesis; L-arginine biosynthesis; L-arginine from L-ornithine and carbamoyl phosphate: step 3/3. The protein is Argininosuccinate lyase of Rhodospirillum rubrum (strain ATCC 11170 / ATH 1.1.1 / DSM 467 / LMG 4362 / NCIMB 8255 / S1).